The sequence spans 324 residues: ATP-dependent 6-phosphofructokinase (324 aa).

Gly-11 serves as a coordination point for ATP. 21 to 25 (RAVVR) contacts ADP. Residues 72–73 (RE) and 102–105 (GNGS) each bind ATP. Asn-103 serves as a coordination point for Mg(2+). 126–128 (TID) lines the substrate pocket. Catalysis depends on Asp-128, which acts as the Proton acceptor. Lys-155 contributes to the ADP binding site. Residues Arg-163 and 170–172 (MGR) contribute to the substrate site. ADP contacts are provided by residues 186–188 (GAE) and 214–216 (KNF). Substrate-binding positions include Glu-223, Arg-248, and 254–257 (YIQR).

It belongs to the phosphofructokinase type A (PFKA) family. ATP-dependent PFK group I subfamily. Prokaryotic clade 'B1' sub-subfamily. As to quaternary structure, homotetramer. The cofactor is Mg(2+).

Its subcellular location is the cytoplasm. It carries out the reaction beta-D-fructose 6-phosphate + ATP = beta-D-fructose 1,6-bisphosphate + ADP + H(+). It participates in carbohydrate degradation; glycolysis; D-glyceraldehyde 3-phosphate and glycerone phosphate from D-glucose: step 3/4. With respect to regulation, allosterically activated by ADP and other diphosphonucleosides, and allosterically inhibited by phosphoenolpyruvate. Its function is as follows. Catalyzes the phosphorylation of D-fructose 6-phosphate to fructose 1,6-bisphosphate by ATP, the first committing step of glycolysis. The protein is ATP-dependent 6-phosphofructokinase of Sulfurihydrogenibium sp. (strain YO3AOP1).